The following is a 429-amino-acid chain: 4-hydroxy-3-methylbut-2-en-1-yl diphosphate synthase (flavodoxin) (429 aa).

Residues Cys323, Cys326, Cys369, and Glu376 each contribute to the [4Fe-4S] cluster site.

Belongs to the IspG family. Requires [4Fe-4S] cluster as cofactor.

It catalyses the reaction (2E)-4-hydroxy-3-methylbut-2-enyl diphosphate + oxidized [flavodoxin] + H2O + 2 H(+) = 2-C-methyl-D-erythritol 2,4-cyclic diphosphate + reduced [flavodoxin]. The protein operates within isoprenoid biosynthesis; isopentenyl diphosphate biosynthesis via DXP pathway; isopentenyl diphosphate from 1-deoxy-D-xylulose 5-phosphate: step 5/6. Converts 2C-methyl-D-erythritol 2,4-cyclodiphosphate (ME-2,4cPP) into 1-hydroxy-2-methyl-2-(E)-butenyl 4-diphosphate. The sequence is that of 4-hydroxy-3-methylbut-2-en-1-yl diphosphate synthase (flavodoxin) from Wolbachia sp. subsp. Brugia malayi (strain TRS).